The primary structure comprises 535 residues: T-complex protein 1 subunit beta (535 aa).

Methionine 1 carries the N-acetylmethionine modification. The residue at position 2 (alanine 2) is an N-acetylalanine. Phosphoserine is present on serine 3. Position 13 is an N6-acetyllysine (lysine 13). Glycine 44 is a binding site for ADP. Glycine 44 is a binding site for ATP. At serine 60 the chain carries Phosphoserine. Aspartate 97 is a binding site for Mg(2+). The ADP site is built by glycine 98, threonine 99, threonine 100, and serine 101. The ATP site is built by glycine 98, threonine 99, and threonine 100. At lysine 154 the chain carries N6-acetyllysine. Positions 168 and 169 each coordinate ADP. The residue at position 181 (lysine 181) is an N6-acetyllysine. Residue lysine 248 forms a Glycyl lysine isopeptide (Lys-Gly) (interchain with G-Cter in SUMO2) linkage. Phosphoserine is present on serine 260. Threonine 261 carries the post-translational modification Phosphothreonine. Glycine 410, glutamate 495, and lysine 500 together coordinate ADP. Glutamate 495 and lysine 500 together coordinate ATP.

The protein belongs to the TCP-1 chaperonin family. As to quaternary structure, component of the chaperonin-containing T-complex (TRiC), a hexadecamer composed of two identical back-to-back stacked rings enclosing a protein folding chamber. Each ring is made up of eight different subunits: TCP1/CCT1, CCT2, CCT3, CCT4, CCT5, CCT6A/CCT6, CCT7, CCT8. Interacts with PACRG. Interacts with FLCN. Interacts with DLEC1. Interacts with SVEP1.

The protein resides in the cytoplasm. The enzyme catalyses ATP + H2O = ADP + phosphate + H(+). Its function is as follows. Component of the chaperonin-containing T-complex (TRiC), a molecular chaperone complex that assists the folding of actin, tubulin and other proteins upon ATP hydrolysis. The TRiC complex mediates the folding of WRAP53/TCAB1, thereby regulating telomere maintenance. As part of the TRiC complex may play a role in the assembly of BBSome, a complex involved in ciliogenesis regulating transports vesicles to the cilia. This is T-complex protein 1 subunit beta from Homo sapiens (Human).